Consider the following 407-residue polypeptide: Peptidase T (407 aa).

H82 provides a ligand contact to Zn(2+). D84 is a catalytic residue. Position 143 (D143) interacts with Zn(2+). Residue E177 is the Proton acceptor of the active site. Residues E178, D200, and H382 each contribute to the Zn(2+) site.

It belongs to the peptidase M20B family. Requires Zn(2+) as cofactor.

Its subcellular location is the cytoplasm. It carries out the reaction Release of the N-terminal residue from a tripeptide.. Cleaves the N-terminal amino acid of tripeptides. The chain is Peptidase T from Streptococcus thermophilus (strain CNRZ 1066).